Here is a 214-residue protein sequence, read N- to C-terminus: Orotate phosphoribosyltransferase (214 aa).

Lys-26 provides a ligand contact to 5-phospho-alpha-D-ribose 1-diphosphate. 34–35 (FF) serves as a coordination point for orotate. 5-phospho-alpha-D-ribose 1-diphosphate-binding positions include 72-73 (YK), Arg-99, Lys-100, Lys-103, His-105, and 124-132 (DDVITAGTA). Orotate contacts are provided by Thr-128 and Arg-156.

The protein belongs to the purine/pyrimidine phosphoribosyltransferase family. PyrE subfamily. Homodimer. Mg(2+) serves as cofactor.

The enzyme catalyses orotidine 5'-phosphate + diphosphate = orotate + 5-phospho-alpha-D-ribose 1-diphosphate. Its pathway is pyrimidine metabolism; UMP biosynthesis via de novo pathway; UMP from orotate: step 1/2. Its function is as follows. Catalyzes the transfer of a ribosyl phosphate group from 5-phosphoribose 1-diphosphate to orotate, leading to the formation of orotidine monophosphate (OMP). The polypeptide is Orotate phosphoribosyltransferase (Pseudoalteromonas translucida (strain TAC 125)).